Reading from the N-terminus, the 432-residue chain is Histidine--tRNA ligase (432 aa).

The protein belongs to the class-II aminoacyl-tRNA synthetase family.

The protein localises to the cytoplasm. It carries out the reaction tRNA(His) + L-histidine + ATP = L-histidyl-tRNA(His) + AMP + diphosphate + H(+). The polypeptide is Histidine--tRNA ligase (Pyrococcus furiosus (strain ATCC 43587 / DSM 3638 / JCM 8422 / Vc1)).